The sequence spans 411 residues: Protein-lysine 6-oxidase (411 aa).

Positions Met1 to Cys21 are cleaved as a signal peptide. Residues Ala22–Gly162 constitute a propeptide, removed by BMP1. Residues Pro60 to Pro168 form a disordered region. 2 N-linked (GlcNAc...) asparagine glycosylation sites follow: Asn91 and Asn138. Residue Tyr181 is modified to Sulfotyrosine. Positions Pro207–Tyr411 are lysyl-oxidase like. Intrachain disulfides connect Cys232–Cys238, Cys285–Cys334, Cys318–Cys324, Cys345–Cys355, and Cys392–Cys406. Cu cation is bound by residues His286, His288, and His290. Residues Lys314–Tyr349 constitute a cross-link (lysine tyrosylquinone (Lys-Tyr)). A 2',4',5'-topaquinone modification is found at Tyr349.

This sequence belongs to the lysyl oxidase family. Interacts with MFAP4. Interacts (via propeptide) with EFEMP2; this interaction is strong and facilitates formation of ternary complexes with ELN during elastic fiber assembly; this interaction limits interaction of EFEMP2 with FBLN5. Cu cation is required as a cofactor. It depends on lysine tyrosylquinone residue as a cofactor. The lysine tyrosylquinone cross-link (LTQ) is generated by condensation of the epsilon-amino group of a lysine with a topaquinone produced by oxidation of tyrosine. Post-translationally, proteolytically cleaved by BMP1 which removes the propeptide. Also proteolytically cleaved by ADAMTS2 and ADAMTS14, but not by ADAMTS3, at an additional cleavage site downstream of the BMP1 cleavage site. The propeptide plays a role in directing the deposition of this enzyme to elastic fibers, via interaction with tropoelastin. Cleavage by BMP1 to remove the propeptide does not increase enzymatic activity but increases binding to collagen. Cleavage by ADAMTS2 produces a form with reduced collagen-binding activity. In terms of processing, sulfated at Tyr-181 and also at either Tyr-177 or Tyr-178 which enhances binding to collagen. Aorta and lung.

The protein localises to the secreted. It is found in the extracellular space. The enzyme catalyses L-lysyl-[protein] + O2 + H2O = (S)-2-amino-6-oxohexanoyl-[protein] + H2O2 + NH4(+). Its function is as follows. Responsible for the post-translational oxidative deamination of peptidyl lysine residues in precursors to fibrous collagen and elastin. Regulator of Ras expression. May play a role in tumor suppression. Plays a role in the aortic wall architecture. This is Protein-lysine 6-oxidase from Rattus norvegicus (Rat).